We begin with the raw amino-acid sequence, 398 residues long: Succinyl-diaminopimelate desuccinylase (398 aa).

His-68 lines the Zn(2+) pocket. Asp-70 is an active-site residue. A Zn(2+)-binding site is contributed by Asp-101. The active-site Proton acceptor is Glu-135. Zn(2+) contacts are provided by Glu-136, Glu-164, and His-349.

The protein belongs to the peptidase M20A family. DapE subfamily. In terms of assembly, homodimer. The cofactor is Zn(2+). It depends on Co(2+) as a cofactor.

It catalyses the reaction N-succinyl-(2S,6S)-2,6-diaminopimelate + H2O = (2S,6S)-2,6-diaminopimelate + succinate. It functions in the pathway amino-acid biosynthesis; L-lysine biosynthesis via DAP pathway; LL-2,6-diaminopimelate from (S)-tetrahydrodipicolinate (succinylase route): step 3/3. Catalyzes the hydrolysis of N-succinyl-L,L-diaminopimelic acid (SDAP), forming succinate and LL-2,6-diaminopimelate (DAP), an intermediate involved in the bacterial biosynthesis of lysine and meso-diaminopimelic acid, an essential component of bacterial cell walls. The sequence is that of Succinyl-diaminopimelate desuccinylase from Wolbachia pipientis subsp. Culex pipiens (strain wPip).